A 382-amino-acid polypeptide reads, in one-letter code: Lipid-A-disaccharide synthase (382 aa).

Belongs to the LpxB family.

It carries out the reaction a lipid X + a UDP-2-N,3-O-bis[(3R)-3-hydroxyacyl]-alpha-D-glucosamine = a lipid A disaccharide + UDP + H(+). The protein operates within bacterial outer membrane biogenesis; LPS lipid A biosynthesis. Condensation of UDP-2,3-diacylglucosamine and 2,3-diacylglucosamine-1-phosphate to form lipid A disaccharide, a precursor of lipid A, a phosphorylated glycolipid that anchors the lipopolysaccharide to the outer membrane of the cell. In Alteromonas mediterranea (strain DSM 17117 / CIP 110805 / LMG 28347 / Deep ecotype), this protein is Lipid-A-disaccharide synthase.